Reading from the N-terminus, the 345-residue chain is 4-hydroxy-3-methylbut-2-en-1-yl diphosphate synthase (flavodoxin) (345 aa).

[4Fe-4S] cluster is bound by residues C271, C274, C306, and E313.

It belongs to the IspG family. The cofactor is [4Fe-4S] cluster.

It catalyses the reaction (2E)-4-hydroxy-3-methylbut-2-enyl diphosphate + oxidized [flavodoxin] + H2O + 2 H(+) = 2-C-methyl-D-erythritol 2,4-cyclic diphosphate + reduced [flavodoxin]. It participates in isoprenoid biosynthesis; isopentenyl diphosphate biosynthesis via DXP pathway; isopentenyl diphosphate from 1-deoxy-D-xylulose 5-phosphate: step 5/6. In terms of biological role, converts 2C-methyl-D-erythritol 2,4-cyclodiphosphate (ME-2,4cPP) into 1-hydroxy-2-methyl-2-(E)-butenyl 4-diphosphate. The protein is 4-hydroxy-3-methylbut-2-en-1-yl diphosphate synthase (flavodoxin) of Haemophilus influenzae (strain PittEE).